The chain runs to 54 residues: Hemolytic toxin (54 aa).

A plays an important role in the hemolytic activity region spans residues A3–A12. The tract at residues G11 to S30 is N-terminal region.

It belongs to the actinoporin family. Sea anemone subfamily. Octamer or nonamer in membranes. Monomer in the soluble state.

The protein resides in the secreted. Its subcellular location is the nematocyst. The protein localises to the target cell membrane. In terms of biological role, pore-forming protein that forms cations-selective hydrophilic pores of around 1 nm and causes cytolysis. Pore formation is a multi-step process that involves specific recognition of membrane sphingomyelin (but neither cholesterol nor phosphatidylcholine) using aromatic rich region and adjacent phosphocholine (POC) binding site, firm binding to the membrane (mainly driven by hydrophobic interactions) accompanied by the transfer of the N-terminal region to the lipid-water interface and finally pore formation after oligomerization of monomers. The protein is Hemolytic toxin of Heteractis magnifica (Magnificent sea anemone).